Reading from the N-terminus, the 23-residue chain is Dahlein-4.3 (23 aa).

In terms of tissue distribution, expressed by the skin dorsal glands.

Its subcellular location is the secreted. In terms of biological role, has no antimicrobial activity. In Ranoidea dahlii (Dahl's aquatic frog), this protein is Dahlein-4.3.